Consider the following 295-residue polypeptide: 4-hydroxy-tetrahydrodipicolinate synthase (295 aa).

Thr47 is a binding site for pyruvate. Tyr135 acts as the Proton donor/acceptor in catalysis. The active-site Schiff-base intermediate with substrate is the Lys163. Ile206 contributes to the pyruvate binding site.

It belongs to the DapA family. As to quaternary structure, homodimer.

The protein resides in the cytoplasm. It carries out the reaction L-aspartate 4-semialdehyde + pyruvate = (2S,4S)-4-hydroxy-2,3,4,5-tetrahydrodipicolinate + H2O + H(+). Its pathway is amino-acid biosynthesis; L-lysine biosynthesis via DAP pathway; (S)-tetrahydrodipicolinate from L-aspartate: step 3/4. Its function is as follows. Catalyzes the condensation of (S)-aspartate-beta-semialdehyde [(S)-ASA] and pyruvate to 4-hydroxy-tetrahydrodipicolinate (HTPA). The polypeptide is 4-hydroxy-tetrahydrodipicolinate synthase (Staphylococcus aureus (strain MSSA476)).